We begin with the raw amino-acid sequence, 382 residues long: Matrix protein (382 aa).

The protein belongs to the morbillivirus/respirovirus/rubulavirus M protein family.

Its subcellular location is the virion. Functionally, the M protein has a crucial role in virus assembly and interacts with the RNP complex as well as with the viral membrane. This Simiiformes (SV41) protein is Matrix protein (M).